The following is a 166-amino-acid chain: Lipoprotein signal peptidase (166 aa).

3 consecutive transmembrane segments (helical) span residues 12-32 (WLWVVVAVLIIDLGSKFLILQ), 70-90 (WFFSGIAIGICVVLTVLMYRS), and 102-122 (ALIIGGALGNLFDRLWHGFVV). Catalysis depends on residues D123 and D141. Residues 137 to 157 (FNLADSAICIGAALIVLEGFL) traverse the membrane as a helical segment.

The protein belongs to the peptidase A8 family.

The protein resides in the cell inner membrane. The enzyme catalyses Release of signal peptides from bacterial membrane prolipoproteins. Hydrolyzes -Xaa-Yaa-Zaa-|-(S,diacylglyceryl)Cys-, in which Xaa is hydrophobic (preferably Leu), and Yaa (Ala or Ser) and Zaa (Gly or Ala) have small, neutral side chains.. Its pathway is protein modification; lipoprotein biosynthesis (signal peptide cleavage). Functionally, this protein specifically catalyzes the removal of signal peptides from prolipoproteins. This Klebsiella pneumoniae subsp. pneumoniae (strain ATCC 700721 / MGH 78578) protein is Lipoprotein signal peptidase.